Reading from the N-terminus, the 140-residue chain is Transcription antitermination protein NusB (140 aa).

Belongs to the NusB family.

Involved in transcription antitermination. Required for transcription of ribosomal RNA (rRNA) genes. Binds specifically to the boxA antiterminator sequence of the ribosomal RNA (rrn) operons. This is Transcription antitermination protein NusB from Thermoanaerobacter pseudethanolicus (strain ATCC 33223 / 39E) (Clostridium thermohydrosulfuricum).